The primary structure comprises 291 residues: Putative phosphatase MG263 (291 aa).

Residue D11 is the Nucleophile of the active site. D11 contacts Mg(2+). L12 serves as a coordination point for phosphate. D13 serves as a coordination point for Mg(2+). Residues 60–61 (TG) and K217 each bind phosphate. D241 is a binding site for Mg(2+). N244 is a binding site for phosphate.

Belongs to the HAD-like hydrolase superfamily. Cof family. Mg(2+) serves as cofactor.

The sequence is that of Putative phosphatase MG263 from Mycoplasma genitalium (strain ATCC 33530 / DSM 19775 / NCTC 10195 / G37) (Mycoplasmoides genitalium).